Here is a 352-residue protein sequence, read N- to C-terminus: Holliday junction branch migration complex subunit RuvB (352 aa).

A large ATPase domain (RuvB-L) region spans residues 13-201 (IPRSRKELRL…FGLCHKIEFY (189 aa)). ATP contacts are provided by residues L37, R41, G82, K85, T86, T87, 148–150 (EDF), R191, Y201, and R238. Residue T86 coordinates Mg(2+). Residues 202–273 (SNDELKQIIF…IIEKALDSQK (72 aa)) form a small ATPAse domain (RuvB-S) region. The head domain (RuvB-H) stretch occupies residues 276 to 352 (NRGLDNVDRK…KYISSNNEKY (77 aa)). 2 residues coordinate DNA: R330 and R335.

The protein belongs to the RuvB family. Homohexamer. Forms an RuvA(8)-RuvB(12)-Holliday junction (HJ) complex. HJ DNA is sandwiched between 2 RuvA tetramers; dsDNA enters through RuvA and exits via RuvB. An RuvB hexamer assembles on each DNA strand where it exits the tetramer. Each RuvB hexamer is contacted by two RuvA subunits (via domain III) on 2 adjacent RuvB subunits; this complex drives branch migration. In the full resolvosome a probable DNA-RuvA(4)-RuvB(12)-RuvC(2) complex forms which resolves the HJ.

The protein localises to the cytoplasm. It carries out the reaction ATP + H2O = ADP + phosphate + H(+). In terms of biological role, the RuvA-RuvB-RuvC complex processes Holliday junction (HJ) DNA during genetic recombination and DNA repair, while the RuvA-RuvB complex plays an important role in the rescue of blocked DNA replication forks via replication fork reversal (RFR). RuvA specifically binds to HJ cruciform DNA, conferring on it an open structure. The RuvB hexamer acts as an ATP-dependent pump, pulling dsDNA into and through the RuvAB complex. RuvB forms 2 homohexamers on either side of HJ DNA bound by 1 or 2 RuvA tetramers; 4 subunits per hexamer contact DNA at a time. Coordinated motions by a converter formed by DNA-disengaged RuvB subunits stimulates ATP hydrolysis and nucleotide exchange. Immobilization of the converter enables RuvB to convert the ATP-contained energy into a lever motion, pulling 2 nucleotides of DNA out of the RuvA tetramer per ATP hydrolyzed, thus driving DNA branch migration. The RuvB motors rotate together with the DNA substrate, which together with the progressing nucleotide cycle form the mechanistic basis for DNA recombination by continuous HJ branch migration. Branch migration allows RuvC to scan DNA until it finds its consensus sequence, where it cleaves and resolves cruciform DNA. The sequence is that of Holliday junction branch migration complex subunit RuvB from Prochlorococcus marinus (strain MIT 9515).